Consider the following 568-residue polypeptide: Serine/threonine-protein kinase RIO1 (568 aa).

2 disordered regions span residues 14–70 (GQFD…DDDW) and 83–109 (YVWN…STPA). A phosphoserine mark is found at serine 21 and serine 22. Over residues 24 to 38 (SENRDLKTVKEKDDI) the composition is skewed to basic and acidic residues. The segment covering 51 to 70 (GEGEIEDEEEEGYDDDDDDW) has biased composition (acidic residues). Over residues 87-105 (GGSNPQANRQTSDSSSAKM) the composition is skewed to polar residues. The Protein kinase domain maps to 180–479 (TEINGCISTG…TGLKKDLSGV (300 aa)). Positions 208, 278, and 280 each coordinate ATP. The active-site Proton acceptor is aspartate 324. Mg(2+) contacts are provided by asparagine 329 and aspartate 341. The 4-aspartylphosphate intermediate role is filled by aspartate 341. The segment at 490–568 (VEERTCSDSE…EKTAKTKKGK (79 aa)) is disordered. The span at 497–513 (DSEDIGSSECSDTDSEE) shows a compositional bias: acidic residues. Over residues 514 to 543 (QGDHARPKKHTTDPDIDKKERKKMVKEAQR) the composition is skewed to basic and acidic residues. Residues 544-568 (EKRKNKIPKHVKKRKEKTAKTKKGK) are compositionally biased toward basic residues.

The protein belongs to the protein kinase superfamily. RIO-type Ser/Thr kinase family. In terms of assembly, associates with the precursor of the 40S ribosome subunit. Interacts (via its N-terminus) with PRMT5 (via its N-terminus). Interacts with WDR77. Found in a PRMT5 complex composed of PRMT5, WDR77 and RIOK1. Interacts (via its C-terminus) with NCL; this interaction targets NCL for PRTM5 methylation. It depends on Mg(2+) as a cofactor.

The protein resides in the cytoplasm. It is found in the cytosol. It catalyses the reaction L-seryl-[protein] + ATP = O-phospho-L-seryl-[protein] + ADP + H(+). It carries out the reaction L-threonyl-[protein] + ATP = O-phospho-L-threonyl-[protein] + ADP + H(+). The enzyme catalyses ATP + H2O = ADP + phosphate + H(+). Involved in the final steps of cytoplasmic maturation of the 40S ribosomal subunit. Involved in processing of 18S-E pre-rRNA to the mature 18S rRNA. Required for the recycling of NOB1 and PNO1 from the late 40S precursor. The association with the very late 40S subunit intermediate may involve a translation-like checkpoint point cycle preceeding the binding to the 60S ribosomal subunit. Despite the protein kinase domain is proposed to act predominantly as an ATPase. The catalytic activity regulates its dynamic association with the 40S subunit. In addition to its role in ribosomal biogenesis acts as an adapter protein by recruiting NCL/nucleolin the to PRMT5 complex for its symmetrical methylation. The chain is Serine/threonine-protein kinase RIO1 from Homo sapiens (Human).